The primary structure comprises 567 residues: Hexose transporter HXT9 (567 aa).

The segment covering 1-16 has biased composition (polar residues); the sequence is MSGVNNTSANDLSTTE. The disordered stretch occupies residues 1–45; it reads MSGVNNTSANDLSTTESNSNSVANAPSVKTEHNDSKNSLNLDATE. Over 1 to 56 the chain is Cytoplasmic; it reads MSGVNNTSANDLSTTESNSNSVANAPSVKTEHNDSKNSLNLDATEPPIDLPQKPLS. The segment covering 17–28 has biased composition (low complexity); it reads SNSNSVANAPSV. The helical transmembrane segment at 57-77 threads the bilayer; the sequence is AYTTVAILCLMIAFGGFIFGW. Residues 78 to 112 are Extracellular-facing; that stretch reads DTGTISGFVNLSDFIRRFGQKNDKGTYYLSKVRMG. A glycan (N-linked (GlcNAc...) asparagine) is linked at Asn-87. A helical membrane pass occupies residues 113–133; sequence LIVSIFNIGCAIGGIVLSKVG. Residues 134–139 are Cytoplasmic-facing; that stretch reads DIYGRR. Residues 140–160 form a helical membrane-spanning segment; that stretch reads IGLITVTAIYVVGILIQITSI. The Extracellular portion of the chain corresponds to 161–170; that stretch reads NKWYQYFIGR. A helical membrane pass occupies residues 171–191; that stretch reads IISGLGVGGIAVLSPMLISEV. Residues 192–197 lie on the Cytoplasmic side of the membrane; the sequence is APKQIR. A helical membrane pass occupies residues 198-218; sequence GTLVQLYQLMCTMGIFLGYCT. Topologically, residues 219-232 are extracellular; sequence NYGTKNYHNATQWR. Asn-227 carries an N-linked (GlcNAc...) asparagine glycan. Residues 233–253 traverse the membrane as a helical segment; the sequence is VGLGLCFAWTTFMVSGMMFVP. Over 254-336 the chain is Cytoplasmic; the sequence is ESPRYLIEVG…IQSLQQLTGD (83 aa). A helical membrane pass occupies residues 337-353; it reads NYFFYYGTTIFKSVGLK. Residues 354–359 lie on the Extracellular side of the membrane; sequence DSFQTS. The helical transmembrane segment at 360–377 threads the bilayer; sequence IIIGVVNFFSSFIAVYTI. Topologically, residues 378 to 384 are cytoplasmic; that stretch reads ERFGRRT. A helical transmembrane segment spans residues 385–405; it reads CLLWGAASMLCCFAVFASVGV. The Extracellular segment spans residues 406 to 429; sequence TKLWPQGSSHQDITSQGAGNCMIV. A helical transmembrane segment spans residues 430 to 450; the sequence is FTMFFIFSFATTWAGGCYVIV. Residues 451 to 467 are Cytoplasmic-facing; it reads SETFPLRVKSRGMAIAT. The helical transmembrane segment at 468 to 488 threads the bilayer; it reads AANWMWGFLISFFTPFITGAI. Residue Asn-489 is a topological domain, extracellular. Residues 490 to 510 traverse the membrane as a helical segment; sequence FYYGYVFLGCLVFAYFYVFFF. The Cytoplasmic segment spans residues 511–567; it reads VPETKGLTLEEVNTMWLEGVPAWKSASWVPPERRTADYDADAIDHDDRPIYKRFFSS.

This sequence belongs to the major facilitator superfamily. Sugar transporter (TC 2.A.1.1) family.

It is found in the membrane. Its function is as follows. Probable glucose transporter. The sequence is that of Hexose transporter HXT9 (HXT9) from Saccharomyces cerevisiae (strain ATCC 204508 / S288c) (Baker's yeast).